Consider the following 170-residue polypeptide: Thialysine N-epsilon-acetyltransferase (170 aa).

The 165-residue stretch at 4–168 (VRIREAKEGD…FQGEATRKLA (165 aa)) folds into the N-acetyltransferase domain. 27–28 (FE) provides a ligand contact to substrate. N6-acetyllysine is present on Lys29. A substrate-binding site is contributed by Glu92. Acetyl-CoA contacts are provided by residues 94 to 96 (IYV), 102 to 107 (GQGIGS), 133 to 135 (NQR), and Tyr140. Tyr140 serves as the catalytic Proton donor. Residue Glu152 coordinates substrate.

This sequence belongs to the acetyltransferase family. In terms of assembly, homodimer. In terms of tissue distribution, widely expressed. Under physiological conditions, SSAT2 is expressed at lower level that SSAT1 (SSAT). Many tissues express only SSAT1, several tissues express both SSAT1 and SSAT2, and bone, cervix, ovary and pineal gland expressed only SSAT2.

It is found in the cytoplasm. It carries out the reaction S-(2-aminoethyl)-L-cysteine + acetyl-CoA = S-(2-acetamidoethyl)-L-cysteine + CoA + H(+). The catalysed reaction is an alkane-alpha,omega-diamine + acetyl-CoA = an N-acetylalkane-alpha,omega-diamine + CoA + H(+). In terms of biological role, catalyzes the N-acetylation of the amino acid thialysine (S-(2-aminoethyl)-L-cysteine), a L-lysine analog with the 4-methylene group substituted with a sulfur. May also catalyze acetylation of polyamines, such as norspermidine, spermidine or spermine. However, ability to acetylate polyamines is weak, suggesting that it does not act as a diamine acetyltransferase in vivo. In Homo sapiens (Human), this protein is Thialysine N-epsilon-acetyltransferase.